Consider the following 188-residue polypeptide: FUN14 domain-containing protein 1B (188 aa).

The helical transmembrane segment at 21–41 (VVNIDGNIFSIYVCFFVCFFF) threads the bilayer. The YXXL signature appears at 52–55 (YEVL). The next 3 helical transmembrane spans lie at 82–102 (YSVA…GFLF), 109–129 (AATA…GGYI), and 167–187 (FFKK…IGLA).

Belongs to the FUN14 family.

It localises to the mitochondrion outer membrane. In terms of biological role, acts as an activator of hypoxia-induced mitophagy, an important mechanism for mitochondrial quality control. The protein is FUN14 domain-containing protein 1B (fundc1-b) of Xenopus laevis (African clawed frog).